Here is a 123-residue protein sequence, read N- to C-terminus: Methicillin resistance regulatory protein MecI (123 aa).

The H-T-H motif DNA-binding region spans 7 to 71; it reads EISSAEWEFM…KDNKIFQYYS (65 aa). Positions 74-123 are important for dimerization; that stretch reads EESDIKYKTSKNFINKVYKGGFNSLVLNFVEKEDLSQDEIEELRNILNKK.

This sequence belongs to the BlaI transcriptional regulatory family. Monomer and homodimer. Upon exposure to beta-lactams, proteolytic cleavage at a single site impairs dimerization and abolishes repressor activity.

Its subcellular location is the cytoplasm. Its function is as follows. Transcriptional repressor that constitutively blocks the transcription of the gene for the penicillin-binding protein MecA. Binds DNA as a dimer. The protein is Methicillin resistance regulatory protein MecI (mecI) of Staphylococcus aureus (strain Mu50 / ATCC 700699).